The primary structure comprises 429 residues: Serine hydroxymethyltransferase (429 aa).

(6S)-5,6,7,8-tetrahydrofolate-binding positions include leucine 126 and 130-132; that span reads GHL. At lysine 235 the chain carries N6-(pyridoxal phosphate)lysine. (6S)-5,6,7,8-tetrahydrofolate is bound at residue 359 to 361; it reads SPF.

Belongs to the SHMT family. Homodimer. Pyridoxal 5'-phosphate is required as a cofactor.

Its subcellular location is the cytoplasm. The enzyme catalyses (6R)-5,10-methylene-5,6,7,8-tetrahydrofolate + glycine + H2O = (6S)-5,6,7,8-tetrahydrofolate + L-serine. The protein operates within one-carbon metabolism; tetrahydrofolate interconversion. It participates in amino-acid biosynthesis; glycine biosynthesis; glycine from L-serine: step 1/1. Its function is as follows. Catalyzes the reversible interconversion of serine and glycine with tetrahydrofolate (THF) serving as the one-carbon carrier. This reaction serves as the major source of one-carbon groups required for the biosynthesis of purines, thymidylate, methionine, and other important biomolecules. Also exhibits THF-independent aldolase activity toward beta-hydroxyamino acids, producing glycine and aldehydes, via a retro-aldol mechanism. The chain is Serine hydroxymethyltransferase from Synechococcus sp. (strain CC9902).